We begin with the raw amino-acid sequence, 409 residues long: WW domain-containing oxidoreductase (409 aa).

The tract at residues Met1–Asp23 is disordered. WW domains are found at residues Asp11 to Thr44 and Gly52 to Leu86. NADP(+) is bound at residue Gly128–Gly134. Position 257 (Ser257) interacts with substrate. Residue Tyr288 is the Proton acceptor of the active site.

It belongs to the short-chain dehydrogenases/reductases (SDR) family.

It localises to the cytoplasm. Its subcellular location is the mitochondrion. The protein resides in the golgi apparatus. The protein localises to the lysosome. Putative oxidoreductase. May control genotoxic stress-induced cell death. May play a role in TGFB1 signaling and TGFB1-mediated cell death. May also play a role in tumor necrosis factor (TNF)-mediated cell death. May play a role in Wnt signaling. The protein is WW domain-containing oxidoreductase (Wwox) of Drosophila melanogaster (Fruit fly).